The primary structure comprises 250 residues: Ureidoacrylate amidohydrolase RutB (250 aa).

Residue aspartate 44 is the Proton acceptor of the active site. The active site involves lysine 153. Cysteine 186 functions as the Nucleophile in the catalytic mechanism.

This sequence belongs to the isochorismatase family. RutB subfamily.

It catalyses the reaction (Z)-3-ureidoacrylate + H2O + H(+) = (Z)-3-aminoacrylate + NH4(+) + CO2. The enzyme catalyses (Z)-3-ureidoacrylate + H2O = (Z)-3-aminoacrylate + carbamate + H(+). The catalysed reaction is (Z)-2-methylureidoacrylate + H2O + H(+) = (Z)-2-methylaminoacrylate + NH4(+) + CO2. Functionally, hydrolyzes ureidoacrylate to form aminoacrylate and carbamate. The carbamate hydrolyzes spontaneously, thereby releasing one of the nitrogen atoms of the pyrimidine ring as ammonia and one of its carbon atoms as CO2. The polypeptide is Ureidoacrylate amidohydrolase RutB (Pantoea ananatis (strain LMG 20103)).